A 307-amino-acid chain; its full sequence is 4-hydroxythreonine-4-phosphate dehydrogenase (307 aa).

Positions 121 and 122 each coordinate substrate. A divalent metal cation contacts are provided by H150, H189, and H245. K253, N262, and R271 together coordinate substrate.

Belongs to the PdxA family. In terms of assembly, homodimer. The cofactor is Zn(2+). Requires Mg(2+) as cofactor. Co(2+) serves as cofactor.

The protein localises to the cytoplasm. The enzyme catalyses 4-(phosphooxy)-L-threonine + NAD(+) = 3-amino-2-oxopropyl phosphate + CO2 + NADH. Its pathway is cofactor biosynthesis; pyridoxine 5'-phosphate biosynthesis; pyridoxine 5'-phosphate from D-erythrose 4-phosphate: step 4/5. Its function is as follows. Catalyzes the NAD(P)-dependent oxidation of 4-(phosphooxy)-L-threonine (HTP) into 2-amino-3-oxo-4-(phosphooxy)butyric acid which spontaneously decarboxylates to form 3-amino-2-oxopropyl phosphate (AHAP). The sequence is that of 4-hydroxythreonine-4-phosphate dehydrogenase from Sulfurimonas denitrificans (strain ATCC 33889 / DSM 1251) (Thiomicrospira denitrificans (strain ATCC 33889 / DSM 1251)).